Reading from the N-terminus, the 799-residue chain is Cadherin-8 (799 aa).

Positions 1–29 (MPERLAETLLDLWTPLIILWITLPSFVYM) are cleaved as a signal peptide. Positions 30 to 61 (APMNQAHVLTTGSPLELSRQSEEMRILNRSKR) are excised as a propeptide. 5 Cadherin domains span residues 62–167 (GWVW…APEF), 168–276 (LNGP…PPKF), 277–391 (AQSL…PPVF), 392–494 (SSPT…DNAP), and 495–616 (EFAS…YVLP). At 62-621 (GWVWNQMFVL…PYVLPIGLSM (560 aa)) the chain is on the extracellular side. Asparagine 188 carries N-linked (GlcNAc...) asparagine glycosylation. N-linked (GlcNAc...) asparagine glycans are attached at residues asparagine 463, asparagine 473, and asparagine 544. Residues 622–642 (GALIAILACIILLLVIVVLFV) traverse the membrane as a helical segment. Over 643 to 799 (TLRRHKNEPL…YSVGESDKET (157 aa)) the chain is Cytoplasmic. Serine 795 bears the Phosphoserine mark.

The protein localises to the cell membrane. Cadherins are calcium-dependent cell adhesion proteins. They preferentially interact with themselves in a homophilic manner in connecting cells; cadherins may thus contribute to the sorting of heterogeneous cell types. The sequence is that of Cadherin-8 (Cdh8) from Rattus norvegicus (Rat).